Consider the following 291-residue polypeptide: Beta-lactamase CTX-M-97 (291 aa).

Positions 1 to 28 are cleaved as a signal peptide; that stretch reads MMTQSIGRSMLTVMATLPLLFSSATLHA. The active-site Acyl-ester intermediate is Ser-73. 237–239 contacts substrate; it reads KTG.

It belongs to the class-A beta-lactamase family.

The enzyme catalyses a beta-lactam + H2O = a substituted beta-amino acid. Functionally, is probably capable of hydrolyzing cephalosporins such as ceftriaxone and ceftazidime, thus conferring resistance to these antibiotics. The polypeptide is Beta-lactamase CTX-M-97 (bla) (Escherichia coli).